A 139-amino-acid polypeptide reads, in one-letter code: D-ribose pyranase (139 aa).

The active-site Proton donor is His20. Substrate-binding positions include Asp28, His106, and Tyr128–Asn130.

It belongs to the RbsD / FucU family. RbsD subfamily. As to quaternary structure, homodecamer.

The protein localises to the cytoplasm. The catalysed reaction is beta-D-ribopyranose = beta-D-ribofuranose. Its pathway is carbohydrate metabolism; D-ribose degradation; D-ribose 5-phosphate from beta-D-ribopyranose: step 1/2. In terms of biological role, catalyzes the interconversion of beta-pyran and beta-furan forms of D-ribose. The protein is D-ribose pyranase of Photobacterium profundum (strain SS9).